A 436-amino-acid polypeptide reads, in one-letter code: GTPase Der (436 aa).

EngA-type G domains lie at 3-168 and 177-352; these read PLIA…PESD and IRLA…DNRA. GTP is bound by residues 9–16, 56–60, 120–123, 183–190, 230–234, and 295–298; these read GRPNVGKS, DTGGY, NKVE, DTAGL, and NKWD. Positions 353 to 436 constitute a KH-like domain; the sequence is RKISTSALNR…VTISLRFLQK (84 aa).

The protein belongs to the TRAFAC class TrmE-Era-EngA-EngB-Septin-like GTPase superfamily. EngA (Der) GTPase family. In terms of assembly, associates with the 50S ribosomal subunit.

Its function is as follows. GTPase that plays an essential role in the late steps of ribosome biogenesis. This is GTPase Der from Chlorobium phaeovibrioides (strain DSM 265 / 1930) (Prosthecochloris vibrioformis (strain DSM 265)).